The chain runs to 185 residues: Elongation factor P (185 aa).

Belongs to the elongation factor P family.

It is found in the cytoplasm. Its pathway is protein biosynthesis; polypeptide chain elongation. Involved in peptide bond synthesis. Stimulates efficient translation and peptide-bond synthesis on native or reconstituted 70S ribosomes in vitro. Probably functions indirectly by altering the affinity of the ribosome for aminoacyl-tRNA, thus increasing their reactivity as acceptors for peptidyl transferase. The chain is Elongation factor P from Herpetosiphon aurantiacus (strain ATCC 23779 / DSM 785 / 114-95).